A 597-amino-acid polypeptide reads, in one-letter code: Bile salt-activated lipase (597 aa).

The N-terminal stretch at Leu-1–Ala-18 is a signal peptide. Cys-82 and Cys-98 are joined by a disulfide. Asn-205 carries N-linked (GlcNAc...) asparagine glycosylation. Ser-212 functions as the Acyl-ester intermediate in the catalytic mechanism. An intrachain disulfide couples Cys-264 to Cys-275. Asp-338 functions as the Charge relay system in the catalytic mechanism. The N-linked (GlcNAc...) asparagine glycan is linked to Asn-379. His-453 functions as the Charge relay system in the catalytic mechanism. A disordered region spans residues Ala-553–Met-591.

The protein belongs to the type-B carboxylesterase/lipase family. In terms of assembly, interacts with CLC.

The protein resides in the secreted. It carries out the reaction a triacylglycerol + H2O = a diacylglycerol + a fatty acid + H(+). The catalysed reaction is 1,2,3-tri-(9Z-octadecenoyl)-glycerol + H2O = di-(9Z)-octadecenoylglycerol + (9Z)-octadecenoate + H(+). The enzyme catalyses 1,2,3-trioctanoylglycerol + H2O = dioctanoylglycerol + octanoate + H(+). It catalyses the reaction a sterol ester + H2O = a sterol + a fatty acid + H(+). It carries out the reaction cholesteryl (9Z-octadecenoate) + H2O = cholesterol + (9Z)-octadecenoate + H(+). The catalysed reaction is an acetyl ester + H2O = an aliphatic alcohol + acetate + H(+). The enzyme catalyses a butanoate ester + H2O = an aliphatic alcohol + butanoate + H(+). It catalyses the reaction 9-hexadecanoyloxy-octadecanoate + H2O = 9-hydroxy-octadecanoate + hexadecanoate + H(+). It carries out the reaction 9-(9Z-octadecenoyloxy)-octadecanoate + H2O = 9-hydroxy-octadecanoate + (9Z)-octadecenoate + H(+). The catalysed reaction is 1-hexadecanoyl-sn-glycero-3-phosphocholine + H2O = sn-glycerol 3-phosphocholine + hexadecanoate + H(+). The enzyme catalyses 12-hexadecanoyloxy-octadecanoate + H2O = 12-hydroxyoctadecanoate + hexadecanoate + H(+). It catalyses the reaction 12-(9Z-octadecenoyloxy)-octadecanoate + H2O = 12-hydroxyoctadecanoate + (9Z)-octadecenoate + H(+). It carries out the reaction 13-(9Z-octadecenoyloxy)-octadecanoate + H2O = 13-hydroxy-octadecanoate + (9Z)-octadecenoate + H(+). The catalysed reaction is 9-(9Z-hexadecenoyloxy)-octadecanoate + H2O = (9Z)-hexadecenoate + 9-hydroxy-octadecanoate + H(+). The enzyme catalyses 12-(9Z-hexadecenoyloxy)-octadecanoate + H2O = 12-hydroxyoctadecanoate + (9Z)-hexadecenoate + H(+). It catalyses the reaction 13-(9Z-hexadecenoyloxy)-octadecanoate + H2O = 13-hydroxy-octadecanoate + (9Z)-hexadecenoate + H(+). It carries out the reaction 12-octadecanoyloxy-octadecanoate + H2O = 12-hydroxyoctadecanoate + octadecanoate + H(+). The catalysed reaction is 13-octadecanoyloxy-octadecanoate + H2O = 13-hydroxy-octadecanoate + octadecanoate + H(+). The enzyme catalyses 5-(9Z-hexadecenoyloxy)-octadecanoate + H2O = 5-hydroxy-octadecanoate + (9Z)-hexadecenoate + H(+). It catalyses the reaction 9-octadecanoyloxy-octadecanoate + H2O = 9-hydroxy-octadecanoate + octadecanoate + H(+). With respect to regulation, activated by bile salts such as sodium taurocholate. In terms of biological role, catalyzes the hydrolysis of a wide range of substrates including cholesteryl esters, phospholipids, lysophospholipids, di- and tri-acylglycerols, and fatty acid esters of hydroxy fatty acids (FAHFA). Preferentially hydrolyzes FAHFAs with the ester bond further away from the carboxylate. Unsaturated FAHFAs are hydrolyzed more quickly than saturated FAHFAs. Has an essential role in the complete digestion of dietary lipids and their intestinal absorption, along with the absorption of fat-soluble vitamins. This is Bile salt-activated lipase (CEL) from Bos taurus (Bovine).